The chain runs to 187 residues: Peptidyl-tRNA hydrolase (187 aa).

Tyr16 provides a ligand contact to tRNA. His21 serves as the catalytic Proton acceptor. Residues Tyr66, Asn68, and Asn114 each contribute to the tRNA site.

This sequence belongs to the PTH family. Monomer.

It localises to the cytoplasm. The catalysed reaction is an N-acyl-L-alpha-aminoacyl-tRNA + H2O = an N-acyl-L-amino acid + a tRNA + H(+). Functionally, hydrolyzes ribosome-free peptidyl-tRNAs (with 1 or more amino acids incorporated), which drop off the ribosome during protein synthesis, or as a result of ribosome stalling. Catalyzes the release of premature peptidyl moieties from peptidyl-tRNA molecules trapped in stalled 50S ribosomal subunits, and thus maintains levels of free tRNAs and 50S ribosomes. This Malacoplasma penetrans (strain HF-2) (Mycoplasma penetrans) protein is Peptidyl-tRNA hydrolase.